We begin with the raw amino-acid sequence, 177 residues long: Alkyl hydroperoxide reductase AhpD (177 aa).

Cysteine 130 functions as the Proton donor in the catalytic mechanism. The cysteines at positions 130 and 133 are disulfide-linked. Cysteine 133 (cysteine sulfenic acid (-SOH) intermediate) is an active-site residue.

The protein belongs to the AhpD family. In terms of assembly, homotrimer.

The enzyme catalyses N(6)-[(R)-dihydrolipoyl]-L-lysyl-[lipoyl-carrier protein] + a hydroperoxide = N(6)-[(R)-lipoyl]-L-lysyl-[lipoyl-carrier protein] + an alcohol + H2O. Functionally, antioxidant protein with alkyl hydroperoxidase activity. Required for the reduction of the AhpC active site cysteine residues and for the regeneration of the AhpC enzyme activity. In Mycolicibacterium smegmatis (strain ATCC 700084 / mc(2)155) (Mycobacterium smegmatis), this protein is Alkyl hydroperoxide reductase AhpD.